The chain runs to 210 residues: Thymidylate kinase (210 aa).

11–18 contributes to the ATP binding site; that stretch reads GGEGAGKT.

Belongs to the thymidylate kinase family.

The enzyme catalyses dTMP + ATP = dTDP + ADP. In terms of biological role, phosphorylation of dTMP to form dTDP in both de novo and salvage pathways of dTTP synthesis. This Halalkalibacterium halodurans (strain ATCC BAA-125 / DSM 18197 / FERM 7344 / JCM 9153 / C-125) (Bacillus halodurans) protein is Thymidylate kinase (tmk).